Reading from the N-terminus, the 291-residue chain is MRTISTIADLREALAEHRRAGRSIGLVPTMGYLHVGHMELVRRAGSENDVVVASIFVNPLQFGANEDLGKYPRDLARDQALLTDGGVDFLFAPGVSDMYPRPMETVVDVPKLGSELEGAVRPGHFAGVATVVTKLFNIVQPDRAYFGEKDFQQLQIIRRMVEDLAQPVTVIGVPTVREEDGLACSSRNVYLTTQERRAAAIVPKALDEAERLIASGVTEPAEVEKRVLEFLAGEPLARPEVVALRDPETLGPVSEIEEKPVLLLLFVRFGTTKLLDNRVIAPKSARFAKVA.

Residue 30 to 37 (MGYLHVGH) participates in ATP binding. His37 acts as the Proton donor in catalysis. Residue Gln61 coordinates (R)-pantoate. Gln61 serves as a coordination point for beta-alanine. 147 to 150 (GEKD) provides a ligand contact to ATP. Gln153 lines the (R)-pantoate pocket. ATP is bound by residues Val176 and 184 to 187 (CSSR).

The protein belongs to the pantothenate synthetase family. Homodimer.

It is found in the cytoplasm. The catalysed reaction is (R)-pantoate + beta-alanine + ATP = (R)-pantothenate + AMP + diphosphate + H(+). Its pathway is cofactor biosynthesis; (R)-pantothenate biosynthesis; (R)-pantothenate from (R)-pantoate and beta-alanine: step 1/1. Its function is as follows. Catalyzes the condensation of pantoate with beta-alanine in an ATP-dependent reaction via a pantoyl-adenylate intermediate. The sequence is that of Pantothenate synthetase from Rhizobium meliloti (strain 1021) (Ensifer meliloti).